Consider the following 931-residue polypeptide: Valine--tRNA ligase (931 aa).

The 'HIGH' region signature appears at 42–52; it reads PNVTGSLHMGH. Residues 523–527 carry the 'KMSKS' region motif; that stretch reads KMSKS. Lys-526 provides a ligand contact to ATP. The stretch at 859 to 931 forms a coiled coil; sequence MAGLIDKEAE…EEQLEKIKYL (73 aa).

The protein belongs to the class-I aminoacyl-tRNA synthetase family. ValS type 1 subfamily. As to quaternary structure, monomer.

It is found in the cytoplasm. It catalyses the reaction tRNA(Val) + L-valine + ATP = L-valyl-tRNA(Val) + AMP + diphosphate. Functionally, catalyzes the attachment of valine to tRNA(Val). As ValRS can inadvertently accommodate and process structurally similar amino acids such as threonine, to avoid such errors, it has a 'posttransfer' editing activity that hydrolyzes mischarged Thr-tRNA(Val) in a tRNA-dependent manner. The polypeptide is Valine--tRNA ligase (Alcanivorax borkumensis (strain ATCC 700651 / DSM 11573 / NCIMB 13689 / SK2)).